The following is a 427-amino-acid chain: Adenylosuccinate synthetase (427 aa).

Residues 12–18 and 40–42 each bind GTP; these read GDEGKGK and GHT. Aspartate 13 functions as the Proton acceptor in the catalytic mechanism. Residues aspartate 13 and glycine 40 each coordinate Mg(2+). IMP-binding positions include 13 to 16, 38 to 41, threonine 130, arginine 144, glutamine 224, threonine 239, and arginine 303; these read DEGK and NAGH. The active-site Proton donor is the histidine 41. 299 to 305 contributes to the substrate binding site; that stretch reads SVTGRPR. GTP is bound by residues arginine 305, 331–333, and 411–413; these read KLD and SVG.

The protein belongs to the adenylosuccinate synthetase family. As to quaternary structure, homodimer. The cofactor is Mg(2+).

It is found in the cytoplasm. It catalyses the reaction IMP + L-aspartate + GTP = N(6)-(1,2-dicarboxyethyl)-AMP + GDP + phosphate + 2 H(+). The protein operates within purine metabolism; AMP biosynthesis via de novo pathway; AMP from IMP: step 1/2. Its function is as follows. Plays an important role in the de novo pathway of purine nucleotide biosynthesis. Catalyzes the first committed step in the biosynthesis of AMP from IMP. The polypeptide is Adenylosuccinate synthetase (Sorangium cellulosum (strain So ce56) (Polyangium cellulosum (strain So ce56))).